A 425-amino-acid chain; its full sequence is Putative dipeptidase MGYG_00085 (425 aa).

The N-terminal stretch at 1-31 (MAPERRSRLSETAGLFVSLLALTSIVPVQAV) is a signal peptide. Positions 56, 58, and 168 each coordinate Zn(2+). Cysteine 107 and cysteine 197 form a disulfide bridge. Residue histidine 195 coordinates substrate. Zn(2+)-binding residues include histidine 239 and histidine 260. Residues arginine 271 and aspartate 331 each contribute to the substrate site. N-linked (GlcNAc...) asparagine glycosylation is present at asparagine 403.

Belongs to the metallo-dependent hydrolases superfamily. Peptidase M19 family. The cofactor is Zn(2+).

It carries out the reaction an L-aminoacyl-L-amino acid + H2O = 2 an L-alpha-amino acid. Hydrolyzes a wide range of dipeptides. The chain is Putative dipeptidase MGYG_00085 from Arthroderma gypseum (strain ATCC MYA-4604 / CBS 118893) (Microsporum gypseum).